A 114-amino-acid polypeptide reads, in one-letter code: Tyrosine-protein phosphatase 11 (114 aa).

A Tyrosine-protein phosphatase domain is found at 1 to 114 (WRMIWEHNTR…EAKHTGPTIV (114 aa)). Asp-81 contributes to the substrate binding site.

The protein belongs to the protein-tyrosine phosphatase family.

The enzyme catalyses O-phospho-L-tyrosyl-[protein] + H2O = L-tyrosyl-[protein] + phosphate. The polypeptide is Tyrosine-protein phosphatase 11 (STY-11) (Styela plicata (Wrinkled sea squirt)).